A 316-amino-acid chain; its full sequence is Erythritol catabolism regulatory protein EryD (316 aa).

A DNA-binding region (H-T-H motif) is located at residues 23–42 (QSAVAKRLGLPSVKAHRLIA).

Belongs to the SorC transcriptional regulatory family.

With respect to regulation, erythritol may act as an inducer, probably by binding to EryD and inhibiting its repressor activity. Represses the expression of the eryABCD operon, which is involved in erythritol catabolism. The chain is Erythritol catabolism regulatory protein EryD from Brucella abortus (strain 2308).